The sequence spans 413 residues: Multifunctional CCA protein (413 aa).

ATP-binding residues include glycine 8 and arginine 11. Glycine 8 and arginine 11 together coordinate CTP. Mg(2+) is bound by residues aspartate 21 and aspartate 23. Arginine 91, arginine 143, and arginine 146 together coordinate ATP. Arginine 91, arginine 143, and arginine 146 together coordinate CTP. The HD domain maps to 232-333 (TGVHVMMVVD…VRLFERSDAL (102 aa)).

The protein belongs to the tRNA nucleotidyltransferase/poly(A) polymerase family. Bacterial CCA-adding enzyme type 1 subfamily. As to quaternary structure, monomer. Can also form homodimers and oligomers. Mg(2+) is required as a cofactor. Requires Ni(2+) as cofactor.

The catalysed reaction is a tRNA precursor + 2 CTP + ATP = a tRNA with a 3' CCA end + 3 diphosphate. The enzyme catalyses a tRNA with a 3' CCA end + 2 CTP + ATP = a tRNA with a 3' CCACCA end + 3 diphosphate. Its function is as follows. Catalyzes the addition and repair of the essential 3'-terminal CCA sequence in tRNAs without using a nucleic acid template. Adds these three nucleotides in the order of C, C, and A to the tRNA nucleotide-73, using CTP and ATP as substrates and producing inorganic pyrophosphate. tRNA 3'-terminal CCA addition is required both for tRNA processing and repair. Also involved in tRNA surveillance by mediating tandem CCA addition to generate a CCACCA at the 3' terminus of unstable tRNAs. While stable tRNAs receive only 3'-terminal CCA, unstable tRNAs are marked with CCACCA and rapidly degraded. The sequence is that of Multifunctional CCA protein from Burkholderia lata (strain ATCC 17760 / DSM 23089 / LMG 22485 / NCIMB 9086 / R18194 / 383).